Here is a 178-residue protein sequence, read N- to C-terminus: Large ribosomal subunit protein uL6 (178 aa).

This sequence belongs to the universal ribosomal protein uL6 family. In terms of assembly, part of the 50S ribosomal subunit.

Its function is as follows. This protein binds to the 23S rRNA, and is important in its secondary structure. It is located near the subunit interface in the base of the L7/L12 stalk, and near the tRNA binding site of the peptidyltransferase center. In Streptococcus uberis (strain ATCC BAA-854 / 0140J), this protein is Large ribosomal subunit protein uL6.